The sequence spans 181 residues: Ferritin (181 aa).

The Ferritin-like diiron domain maps to arginine 6–glycine 155. Glutamate 23, glutamate 58, histidine 61, glutamate 103, and glutamine 137 together coordinate Fe cation.

Belongs to the ferritin family. In terms of assembly, oligomer of 12 or 24 subunits. The functional molecule is roughly spherical and contains a central cavity into which the polymeric mineral iron core is deposited. In terms of processing, the N-terminus is blocked.

The protein localises to the cytoplasm. It carries out the reaction 4 Fe(2+) + O2 + 4 H(+) = 4 Fe(3+) + 2 H2O. In terms of biological role, stores iron in a soluble, non-toxic, readily available form. Important for iron homeostasis. Has ferroxidase activity. Iron is taken up in the ferrous form and deposited as ferric hydroxides after oxidation. In Pacifastacus leniusculus (Signal crayfish), this protein is Ferritin.